Reading from the N-terminus, the 576-residue chain is Potassium-transporting ATPase potassium-binding subunit (576 aa).

The next 12 helical transmembrane spans lie at 3 to 23 (IFLD…ISPI), 68 to 88 (LYAL…TLLF), 137 to 157 (GLAL…LVLI), 179 to 199 (ILYV…SQGV), 267 to 287 (FEAF…GYMI), 294 to 314 (WFLY…QYYF), 339 to 359 (FGIG…CGAV), 369 to 389 (LGGL…GGVG), 391 to 411 (GLYG…LMIG), 430 to 450 (VVIT…ALYT), 495 to 515 (ITTG…VFYM), and 537 to 557 (LVFG…TFLP).

The protein belongs to the KdpA family. In terms of assembly, the system is composed of three essential subunits: KdpA, KdpB and KdpC.

The protein resides in the cell inner membrane. In terms of biological role, part of the high-affinity ATP-driven potassium transport (or Kdp) system, which catalyzes the hydrolysis of ATP coupled with the electrogenic transport of potassium into the cytoplasm. This subunit binds the periplasmic potassium ions and delivers the ions to the membrane domain of KdpB through an intramembrane tunnel. The polypeptide is Potassium-transporting ATPase potassium-binding subunit (Hydrogenobaculum sp. (strain Y04AAS1)).